Consider the following 190-residue polypeptide: U1 small nuclear ribonucleoprotein C-1 (190 aa).

Residues 4-36 form a Matrin-type zinc finger; sequence YYCDYCDVFLVSESPSVRKAHNSGRNHLTNVRD. Residues 57-190 are disordered; that stretch reads FETGGGNSTS…PDRARQLGLI (134 aa). Over residues 72–82 the composition is skewed to pro residues; sequence GNPPGSQPGPP. Over residues 109-124 the composition is skewed to low complexity; it reads AMLALMNGQNGMSSPG. The span at 125-141 shows a compositional bias: pro residues; sequence SGPPPMRFAGPPIPNNM. Residues 180 to 190 show a composition bias toward basic and acidic residues; the sequence is NPDRARQLGLI.

Belongs to the U1 small nuclear ribonucleoprotein C family. U1 snRNP is composed of the 7 core Sm proteins B/B', D1, D2, D3, E, F and G that assemble in a heptameric protein ring on the Sm site of the small nuclear RNA to form the core snRNP, and at least 3 U1 snRNP-specific proteins U1-70K, U1-A and U1-C. U1-C interacts with U1 snRNA and the 5' splice-site region of the pre-mRNA.

It localises to the nucleus. In terms of biological role, component of the spliceosomal U1 snRNP, which is essential for recognition of the pre-mRNA 5' splice-site and the subsequent assembly of the spliceosome. U1-C is directly involved in initial 5' splice-site recognition for both constitutive and regulated alternative splicing. The interaction with the 5' splice-site seems to precede base-pairing between the pre-mRNA and the U1 snRNA. Stimulates commitment or early (E) complex formation by stabilizing the base pairing of the 5' end of the U1 snRNA and the 5' splice-site region. The chain is U1 small nuclear ribonucleoprotein C-1 from Puccinia graminis f. sp. tritici (strain CRL 75-36-700-3 / race SCCL) (Black stem rust fungus).